We begin with the raw amino-acid sequence, 278 residues long: Release factor glutamine methyltransferase (278 aa).

S-adenosyl-L-methionine contacts are provided by residues 117–121 (GTGSG), Asp-140, and Asn-184. 184-187 (NPPY) provides a ligand contact to substrate.

The protein belongs to the protein N5-glutamine methyltransferase family. PrmC subfamily.

It carries out the reaction L-glutaminyl-[peptide chain release factor] + S-adenosyl-L-methionine = N(5)-methyl-L-glutaminyl-[peptide chain release factor] + S-adenosyl-L-homocysteine + H(+). Functionally, methylates the class 1 translation termination release factors RF1/PrfA and RF2/PrfB on the glutamine residue of the universally conserved GGQ motif. This chain is Release factor glutamine methyltransferase, found in Bacteroides thetaiotaomicron (strain ATCC 29148 / DSM 2079 / JCM 5827 / CCUG 10774 / NCTC 10582 / VPI-5482 / E50).